The primary structure comprises 285 residues: MKLIAIDLDGTLLNSKHQVSLENENALRQAQRDGIEVVVSTGRAHFDVMSIFEPLGIKTWVISANGAVIHDPEGRLYHHETIDKKRAYDILSWLESENYYYEVFTGSAIYTPQNGRELLDVELDRFRSANPEADLSVLKQAAEVQYSQSGFAYINSFQELFEADEPIDFYNILGFSFFKEKLEAGWKRYEHAEDLTLVSSAEHNFELSSRKASKGQALKRLAKQLNIPLEETAAVGDSLNDKSMLEAAGKGVAMGNAREDIKSIADAVTLTNDEHGVAHMMKHLL.

Asp-7 functions as the Nucleophile in the catalytic mechanism. Asp-7 is a binding site for Mg(2+). Leu-8 is a phosphate binding site. Residue Asp-9 participates in Mg(2+) binding. Phosphate contacts are provided by residues 41–42 (TG) and Lys-214. Asp-237 and Ser-238 together coordinate Mg(2+). Phosphate is bound by residues Asn-240 and 282-283 (KH).

The protein belongs to the HAD-like hydrolase superfamily. Cof family. Requires Mg(2+) as cofactor.

Catalyzes the dephosphorylation of phosphorylated 5-6 carbon sugars and monophosphate nucleotides (NMP) in vitro. To a lesser extent, dephosphorylates flavin mononucleotide (FMN) in vitro. This is Phosphatase YwpJ (ywpJ) from Bacillus subtilis (strain 168).